A 709-amino-acid polypeptide reads, in one-letter code: Elongation factor G (709 aa).

The 286-residue stretch at 10–295 folds into the tr-type G domain; that stretch reads NQIRNIGIMA…AVVDYLPSPE (286 aa). GTP is bound by residues 19-26, 91-95, and 145-148; these read AHIDAGKT, DTPGH, and NKMD.

It belongs to the TRAFAC class translation factor GTPase superfamily. Classic translation factor GTPase family. EF-G/EF-2 subfamily.

Its subcellular location is the cytoplasm. In terms of biological role, catalyzes the GTP-dependent ribosomal translocation step during translation elongation. During this step, the ribosome changes from the pre-translocational (PRE) to the post-translocational (POST) state as the newly formed A-site-bound peptidyl-tRNA and P-site-bound deacylated tRNA move to the P and E sites, respectively. Catalyzes the coordinated movement of the two tRNA molecules, the mRNA and conformational changes in the ribosome. The polypeptide is Elongation factor G (Bifidobacterium adolescentis (strain ATCC 15703 / DSM 20083 / NCTC 11814 / E194a)).